The sequence spans 337 residues: Glycerol-3-phosphate dehydrogenase [NAD(P)+] (337 aa).

NADPH-binding residues include W12 and K107. The sn-glycerol 3-phosphate site is built by K107, G138, and T140. A142 serves as a coordination point for NADPH. 5 residues coordinate sn-glycerol 3-phosphate: K193, D246, S256, R257, and N258. The active-site Proton acceptor is K193. Residue R257 coordinates NADPH. Residues V282 and E284 each coordinate NADPH.

It belongs to the NAD-dependent glycerol-3-phosphate dehydrogenase family.

It localises to the cytoplasm. It carries out the reaction sn-glycerol 3-phosphate + NAD(+) = dihydroxyacetone phosphate + NADH + H(+). The enzyme catalyses sn-glycerol 3-phosphate + NADP(+) = dihydroxyacetone phosphate + NADPH + H(+). Its pathway is membrane lipid metabolism; glycerophospholipid metabolism. Functionally, catalyzes the reduction of the glycolytic intermediate dihydroxyacetone phosphate (DHAP) to sn-glycerol 3-phosphate (G3P), the key precursor for phospholipid synthesis. The protein is Glycerol-3-phosphate dehydrogenase [NAD(P)+] of Koribacter versatilis (strain Ellin345).